The sequence spans 296 residues: Ribosomal RNA small subunit methyltransferase H (296 aa).

Residues 30-32 (GGH), Asp-49, Phe-76, Asp-97, and Gln-104 each bind S-adenosyl-L-methionine.

It belongs to the methyltransferase superfamily. RsmH family.

The protein resides in the cytoplasm. It carries out the reaction cytidine(1402) in 16S rRNA + S-adenosyl-L-methionine = N(4)-methylcytidine(1402) in 16S rRNA + S-adenosyl-L-homocysteine + H(+). Specifically methylates the N4 position of cytidine in position 1402 (C1402) of 16S rRNA. The chain is Ribosomal RNA small subunit methyltransferase H from Mesomycoplasma hyopneumoniae (strain 7448) (Mycoplasma hyopneumoniae).